The following is a 448-amino-acid chain: Adenylosuccinate synthetase (448 aa).

GTP contacts are provided by residues 22–28 (GDEGKGK) and 50–52 (GHT). The active-site Proton acceptor is aspartate 23. 2 residues coordinate Mg(2+): aspartate 23 and glycine 50. IMP-binding positions include 23 to 26 (DEGK), 48 to 51 (NAGH), threonine 139, arginine 153, glutamine 234, threonine 249, and arginine 321. Histidine 51 acts as the Proton donor in catalysis. Position 317 to 323 (317 to 323 (SVTGRPR)) interacts with substrate. GTP contacts are provided by residues arginine 323, 349-351 (KLD), and 431-433 (STG).

The protein belongs to the adenylosuccinate synthetase family. In terms of assembly, homodimer. Mg(2+) serves as cofactor.

The protein resides in the cytoplasm. The catalysed reaction is IMP + L-aspartate + GTP = N(6)-(1,2-dicarboxyethyl)-AMP + GDP + phosphate + 2 H(+). Its pathway is purine metabolism; AMP biosynthesis via de novo pathway; AMP from IMP: step 1/2. In terms of biological role, plays an important role in the de novo pathway of purine nucleotide biosynthesis. Catalyzes the first committed step in the biosynthesis of AMP from IMP. This chain is Adenylosuccinate synthetase, found in Burkholderia pseudomallei (strain 1106a).